Consider the following 3902-residue polypeptide: Mediator of RNA polymerase II transcription subunit 12 (3902 aa).

10 disordered regions span residues 414–576 (ESLT…EELP), 619–674 (FEPF…NPKL), 694–940 (AFDP…LEAL), 977–1029 (VVEK…PEPP), 1812–1831 (TSHK…TETR), 2463–2675 (TVEP…NRKQ), 2719–2771 (AGAS…SSSM), 2876–3151 (RIME…PEMQ), 3195–3549 (LQAG…SSNQ), and 3563–3902 (AGLN…QQQY). A compositionally biased stretch (acidic residues) spans 420-430 (EPEEDPEEGPE). Pro residues predominate over residues 709-721 (PTPPEAPPPPPPV). Composition is skewed to basic and acidic residues over residues 740 to 802 (EDGK…EHLN), 912 to 928 (KAGD…KKPD), 977 to 1004 (VVEK…EKLP), and 1018 to 1027 (KTPEKPKTPE). Residues 1812–1824 (TSHKTKDVKRKSA) show a composition bias toward basic residues. The interval 2409 to 3902 (QTTRLDKVAK…MGQFPNQQQY (1494 aa)) is required for nuclear localization. Residues 2474-2547 (AAVKKPEEET…VTAKDTEKDT (74 aa)) show a composition bias toward basic and acidic residues. Residues 2480–2526 (EEETAEKKKDEAKKADEKTTKADDEKKKDETADAKKDNEKQKEEKDK) adopt a coiled-coil conformation. Low complexity-rich tracts occupy residues 2548–2566 (AAPT…AAPD), 2614–2632 (SRAN…SSTT), and 2734–2748 (PHPG…QHQG). A compositionally biased stretch (basic and acidic residues) spans 2876–2979 (RIMEEQRILR…ERLERERVAR (104 aa)). Low complexity-rich tracts occupy residues 2980–3001 (EALA…QAQQ), 3010–3143 (QQQR…QRNP), 3196–3205 (QAGQAAGQQQ), and 3226–3236 (PQQQQQQPQQP). Over residues 3237 to 3248 (GTSQIPNTTPTR) the composition is skewed to polar residues. Composition is skewed to low complexity over residues 3250–3275 (ANPM…GQPG), 3284–3295 (GQQQQNQFQRQG), and 3317–3389 (GQQQ…FGRQ). The segment covering 3391 to 3409 (APNQENFQQQPGFNQNAAG) has biased composition (polar residues). Composition is skewed to low complexity over residues 3410–3446 (QNYQ…QQQN), 3454–3539 (QSQQ…QGNQ), and 3570–3619 (SSGN…RPGM). The segment covering 3620–3649 (GQQGMGQQGMGQQGGMGQSGRGQPGMGGQS) has biased composition (gly residues). Composition is skewed to low complexity over residues 3663 to 3700 (MGQP…QQQH), 3710 to 3742 (QQGR…QQAQ), and 3760 to 3830 (QQQQ…HRGQ). Over residues 3831-3841 (GQQGHGMGGAG) the composition is skewed to gly residues. Over residues 3842 to 3888 (QQHQQVPQQQQNQYFQPQQQQDQRMQQQPGGQQQQQQGQSGQQQNNQ) the composition is skewed to low complexity. Residues 3889-3902 (HYNNMGQFPNQQQY) are compositionally biased toward polar residues.

This sequence belongs to the Mediator complex subunit 12 family. Component of the Mediator complex.

It is found in the nucleus. Functionally, component of the Mediator complex, a coactivator involved in regulated gene transcription of nearly all RNA polymerase II-dependent genes. Mediator functions as a bridge to convey information from gene-specific regulatory proteins to the basal RNA polymerase II transcription machinery. Mediator is recruited to promoters by direct interactions with regulatory proteins and serves as a scaffold for the assembly of a functional preinitiation complex with RNA polymerase II and the general transcription factors. In Caenorhabditis briggsae, this protein is Mediator of RNA polymerase II transcription subunit 12 (dpy-22).